The primary structure comprises 416 residues: Serine protease hepsin (416 aa).

Residues M1–A18 are Cytoplasmic-facing. The chain crosses the membrane as a helical; Signal-anchor for type II membrane protein span at residues A19–V39. At T40–P416 the chain is on the extracellular side. The SRCR domain maps to V53–Q150. 8 cysteine pairs are disulfide-bonded: C76–C139, C89–C149, C118–C137, C152–C276, C187–C203, C290–C358, C321–C337, and C348–C380. N111 is a glycosylation site (N-linked (GlcNAc...) asparagine). The Peptidase S1 domain maps to I162–K404. Catalysis depends on charge relay system residues H202 and D256. S352 (charge relay system) is an active-site residue.

It belongs to the peptidase S1 family. As to expression, widely expressed. Present in brain, heart, kidney, liver, stomach, muscle, lung, testis, skin and eye. Not expressed in ovary and thynus. In inner ear tissues, expressed in stria vascularis, modiolus, organ of Corti and spiral ganglion.

It localises to the cell membrane. It is found in the apical cell membrane. The catalysed reaction is Cleavage after basic amino-acid residues, with Arg strongly preferred to Lys.. In terms of biological role, serine protease that cleaves extracellular substrates, and contributes to the proteolytic processing of growth factors, such as HGF and MST1/HGFL. Plays a role in cell growth and maintenance of cell morphology. Plays a role in the proteolytic processing of ACE2. Mediates the proteolytic cleavage of urinary UMOD that is required for UMOD polymerization. This is Serine protease hepsin (Hpn) from Rattus norvegicus (Rat).